A 256-amino-acid chain; its full sequence is Phosphoribosylaminoimidazole-succinocarboxamide synthase (256 aa).

Positions 234 to 256 (KPQKPAAAKKKAPVSKKTVKRTR) are disordered. The span at 240–256 (AAKKKAPVSKKTVKRTR) shows a compositional bias: basic residues.

The protein belongs to the SAICAR synthetase family.

The catalysed reaction is 5-amino-1-(5-phospho-D-ribosyl)imidazole-4-carboxylate + L-aspartate + ATP = (2S)-2-[5-amino-1-(5-phospho-beta-D-ribosyl)imidazole-4-carboxamido]succinate + ADP + phosphate + 2 H(+). It functions in the pathway purine metabolism; IMP biosynthesis via de novo pathway; 5-amino-1-(5-phospho-D-ribosyl)imidazole-4-carboxamide from 5-amino-1-(5-phospho-D-ribosyl)imidazole-4-carboxylate: step 1/2. This chain is Phosphoribosylaminoimidazole-succinocarboxamide synthase, found in Methanoregula boonei (strain DSM 21154 / JCM 14090 / 6A8).